The sequence spans 3312 residues: Cadherin EGF LAG seven-pass G-type receptor 3 (3312 aa).

The N-terminal stretch at 1–32 (MMARRPPWRGLGGRSTPILLLLLLSLFPLSQE) is a signal peptide. Over 33-2540 (ELGGGGHQGW…RLEGDLELLA (2508 aa)) the chain is Extracellular. Disordered regions lie at residues 90–112 (GRRQ…LGIE), 143–199 (GRTG…RKRV), and 212–306 (GSKG…EARK). The segment covering 159 to 173 (SSGVPGSGNSSPLPS) has biased composition (low complexity). The segment covering 290–299 (RPGPRPPGLP) has biased composition (pro residues). 9 Cadherin domains span residues 326-433 (PQYN…SPVF), 434-545 (EQAQ…APQF), 546-651 (SEKR…IPIF), 652-756 (VSTP…RPEF), 757-858 (TMKE…RPVF), 859-961 (QSAH…APQF), 962-1067 (VASH…APVF), 1068-1169 (PAEE…SPVL), and 1170-1265 (NNFQ…RVVI). N-linked (GlcNAc...) asparagine glycosylation occurs at Asn-632. The N-linked (GlcNAc...) asparagine glycan is linked to Asn-847. N-linked (GlcNAc...) asparagine glycosylation is found at Asn-1182, Asn-1222, Asn-1317, and Asn-1327. One can recognise an EGF-like 1; calcium-binding domain in the interval 1375–1433 (DDNVCLREPCENYMKCVSVLRFDSSAPFLASASTLFRPIQPIAGLRCRCPPGFTGDFCE). Cystine bridges form between Cys-1379–Cys-1390, Cys-1384–Cys-1421, Cys-1423–Cys-1432, Cys-1439–Cys-1450, Cys-1444–Cys-1459, Cys-1461–Cys-1470, Cys-1479–Cys-1490, Cys-1484–Cys-1500, and Cys-1502–Cys-1513. The EGF-like 2; calcium-binding domain occupies 1435–1471 (ELDLCYSNPCRNGGACARREGGYTCVCRPRFTGEDCE). In terms of domain architecture, EGF-like 3; calcium-binding spans 1475–1514 (EAGRCVPGVCRNGGTCTDAPNGGFRCQCPAGGAFEGPRCE). The Laminin G-like 1 domain occupies 1515–1719 (VAARSFPPSS…VANNGTMAGC (205 aa)). 2 N-linked (GlcNAc...) asparagine glycosylation sites follow: Asn-1649 and Asn-1713. Cystine bridges form between Cys-1693–Cys-1719, Cys-1726–Cys-1737, Cys-1731–Cys-1746, and Cys-1748–Cys-1757. Residues 1722 to 1758 (KLHFCDSGPCKNSGFCSERWGSFSCDCPVGFGGKDCQ) form the EGF-like 4; calcium-binding domain. Residues 1764-1944 (PHHFRGNGTL…SHRVNAEPGC (181 aa)) form the Laminin G-like 2 domain. A glycan (N-linked (GlcNAc...) asparagine) is linked at Asn-1770. 9 disulfide bridges follow: Cys-1915–Cys-1944, Cys-1950–Cys-1961, Cys-1955–Cys-1970, Cys-1972–Cys-1981, Cys-1985–Cys-1996, Cys-1990–Cys-2008, Cys-2010–Cys-2019, Cys-2027–Cys-2040, and Cys-2042–Cys-2052. Residues 1946-1982 (VTNACASGPCPPHADCRDLWQTFSCTCQPGYYGPGCV) enclose the EGF-like 5; calcium-binding domain. (3R)-3-hydroxyaspartate is present on Asp-1963. Positions 1983–2020 (DACLLNPCQNQGSCRHLPGAPHGYTCDCVGGYFGHHCE) constitute an EGF-like 6; calcium-binding domain. Positions 2021–2053 (HRMDQQCPRGWWGSPTCGPCNCDVHKGFDPNCN) constitute an EGF-like 7; calcium-binding domain. Residue Asn-2053 is glycosylated (N-linked (GlcNAc...) asparagine). The EGF-like 8; calcium-binding domain occupies 2055 to 2090 (TNGQCHCKEFHYRPRGSDSCLPCDCYPVGSTSRSCA). 5 cysteine pairs are disulfide-bonded: Cys-2059/Cys-2074, Cys-2061/Cys-2077, Cys-2079/Cys-2089, Cys-2098/Cys-2107, and Cys-2110/Cys-2122. One can recognise a Laminin EGF-like domain in the interval 2077–2124 (CDCYPVGSTSRSCAPHSGQCPCRPGALGRQCNSCDSPFAEVTASGCRV). Tyr-2126 carries the post-translational modification Phosphotyrosine. Asn-2177, Asn-2196, Asn-2386, Asn-2474, and Asn-2506 each carry an N-linked (GlcNAc...) asparagine glycan. Residues 2361 to 2399 (THVLLPSQSPRPSPSEVLPTSSSIENSTTSSVVPPPAPP) form a disordered region. The region spanning 2368–2530 (QSPRPSPSEV…GVLMDASPRE (163 aa)) is the GAIN-B domain. Over residues 2380–2391 (TSSSIENSTTSS) the composition is skewed to low complexity. 2 disulfide bridges follow: Cys-2480–Cys-2512 and Cys-2500–Cys-2514. Residues 2480–2530 (CVQWDPPGLAEQHGVWTARDCELVHRNGSHARCRCSRTGTFGVLMDASPRE) are GPS. Residues 2541-2561 (VFTHVVVAVSVAALVLTAAIL) form a helical membrane-spanning segment. The Cytoplasmic segment spans residues 2562 to 2572 (LSLRSLKSNVR). Residues 2573–2593 (GIHANVAAALGVAELLFLLGI) form a helical membrane-spanning segment. Residues 2594-2601 (HRTHNQLV) lie on the Extracellular side of the membrane. Residues 2602 to 2622 (CTAVAILLHYFFLSTFAWLFV) traverse the membrane as a helical segment. Over 2623-2643 (QGLHLYRMQVEPRNVDRGAMR) the chain is Cytoplasmic. Residues 2644-2664 (FYHALGWGVPAVLLGLAVGLD) form a helical membrane-spanning segment. Residues 2665–2681 (PEGYGNPDFCWISVHEP) lie on the Extracellular side of the membrane. A helical membrane pass occupies residues 2682 to 2702 (LIWSFAGPVVLVIVMNGTMFL). The Cytoplasmic portion of the chain corresponds to 2703–2725 (LAARTSCSTGQREAKKTSALTLR). A helical membrane pass occupies residues 2726 to 2746 (SSFLLLLLVSASWLFGLLAVN). Topologically, residues 2747–2753 (HSILAFH) are extracellular. A helical membrane pass occupies residues 2754–2774 (YLHAGLCGLQGLAVLLLFCVL). Topologically, residues 2775–3312 (NADARAAWMP…SEVPRSEGHS (538 aa)) are cytoplasmic. Disordered stretches follow at residues 2888–2927 (AGAD…QRPL) and 2978–3006 (TSKD…AQRQ). Positions 2890-2900 (ADSDSDSDLSL) are enriched in acidic residues. Phosphotyrosine is present on Tyr-3051. Disordered regions lie at residues 3086 to 3243 (EEAP…TEQL) and 3256 to 3312 (SALS…EGHS). A Phosphoserine modification is found at Ser-3097. 3 stretches are compositionally biased toward low complexity: residues 3175-3198 (SPQR…SRSS), 3256-3265 (SALSSVQSSS), and 3272-3281 (TTATPSATAS). Polar residues predominate over residues 3287 to 3300 (TPRSATSHSISELS).

This sequence belongs to the G-protein coupled receptor 2 family. LN-TM7 subfamily.

It localises to the cell membrane. Functionally, receptor that may have an important role in cell/cell signaling during nervous system formation. The protein is Cadherin EGF LAG seven-pass G-type receptor 3 (CELSR3) of Homo sapiens (Human).